The chain runs to 231 residues: 7-cyano-7-deazaguanine synthase (231 aa).

ATP is bound at residue 8 to 18 (FSGGQDSTTCL). The Zn(2+) site is built by Cys188, Cys197, Cys200, and Cys203.

Belongs to the QueC family. It depends on Zn(2+) as a cofactor.

It carries out the reaction 7-carboxy-7-deazaguanine + NH4(+) + ATP = 7-cyano-7-deazaguanine + ADP + phosphate + H2O + H(+). The protein operates within purine metabolism; 7-cyano-7-deazaguanine biosynthesis. Functionally, catalyzes the ATP-dependent conversion of 7-carboxy-7-deazaguanine (CDG) to 7-cyano-7-deazaguanine (preQ(0)). The polypeptide is 7-cyano-7-deazaguanine synthase (Escherichia coli (strain SMS-3-5 / SECEC)).